A 291-amino-acid chain; its full sequence is Release factor glutamine methyltransferase (291 aa).

S-adenosyl-L-methionine is bound by residues 127-131 (GTGSG), aspartate 150, tryptophan 179, and asparagine 196. Residue 196–199 (NPPY) participates in substrate binding.

Belongs to the protein N5-glutamine methyltransferase family. PrmC subfamily.

The catalysed reaction is L-glutaminyl-[peptide chain release factor] + S-adenosyl-L-methionine = N(5)-methyl-L-glutaminyl-[peptide chain release factor] + S-adenosyl-L-homocysteine + H(+). Functionally, methylates the class 1 translation termination release factors RF1/PrfA and RF2/PrfB on the glutamine residue of the universally conserved GGQ motif. In Thermosynechococcus vestitus (strain NIES-2133 / IAM M-273 / BP-1), this protein is Release factor glutamine methyltransferase.